A 305-amino-acid chain; its full sequence is UDP-3-O-acyl-N-acetylglucosamine deacetylase (305 aa).

The Zn(2+) site is built by histidine 78, histidine 237, and aspartate 241. Histidine 264 acts as the Proton donor in catalysis.

It belongs to the LpxC family. Zn(2+) serves as cofactor.

The enzyme catalyses a UDP-3-O-[(3R)-3-hydroxyacyl]-N-acetyl-alpha-D-glucosamine + H2O = a UDP-3-O-[(3R)-3-hydroxyacyl]-alpha-D-glucosamine + acetate. Its pathway is glycolipid biosynthesis; lipid IV(A) biosynthesis; lipid IV(A) from (3R)-3-hydroxytetradecanoyl-[acyl-carrier-protein] and UDP-N-acetyl-alpha-D-glucosamine: step 2/6. Catalyzes the hydrolysis of UDP-3-O-myristoyl-N-acetylglucosamine to form UDP-3-O-myristoylglucosamine and acetate, the committed step in lipid A biosynthesis. This is UDP-3-O-acyl-N-acetylglucosamine deacetylase from Dechloromonas aromatica (strain RCB).